We begin with the raw amino-acid sequence, 235 residues long: Purine nucleoside phosphorylase DeoD-type (235 aa).

Residue H4 coordinates a purine D-ribonucleoside. Residues G20, R24, R43, and 87–90 (RVGT) each bind phosphate. A purine D-ribonucleoside-binding positions include 179-181 (EME) and 203-204 (SD). The Proton donor role is filled by D204.

It belongs to the PNP/UDP phosphorylase family. In terms of assembly, homohexamer; trimer of homodimers.

It catalyses the reaction a purine D-ribonucleoside + phosphate = a purine nucleobase + alpha-D-ribose 1-phosphate. It carries out the reaction a purine 2'-deoxy-D-ribonucleoside + phosphate = a purine nucleobase + 2-deoxy-alpha-D-ribose 1-phosphate. Catalyzes the reversible phosphorolytic breakdown of the N-glycosidic bond in the beta-(deoxy)ribonucleoside molecules, with the formation of the corresponding free purine bases and pentose-1-phosphate. This Clostridium perfringens (strain SM101 / Type A) protein is Purine nucleoside phosphorylase DeoD-type.